A 177-amino-acid chain; its full sequence is Large ribosomal subunit protein uL6 (177 aa).

Belongs to the universal ribosomal protein uL6 family. As to quaternary structure, part of the 50S ribosomal subunit.

In terms of biological role, this protein binds to the 23S rRNA, and is important in its secondary structure. It is located near the subunit interface in the base of the L7/L12 stalk, and near the tRNA binding site of the peptidyltransferase center. The chain is Large ribosomal subunit protein uL6 from Bradyrhizobium sp. (strain ORS 278).